A 95-amino-acid polypeptide reads, in one-letter code: DNA-directed RNA polymerase subunit Rpo11 (95 aa).

It belongs to the archaeal Rpo11/eukaryotic RPB11/RPC19 RNA polymerase subunit family. In terms of assembly, part of the RNA polymerase complex.

Its subcellular location is the cytoplasm. The enzyme catalyses RNA(n) + a ribonucleoside 5'-triphosphate = RNA(n+1) + diphosphate. Its function is as follows. DNA-dependent RNA polymerase (RNAP) catalyzes the transcription of DNA into RNA using the four ribonucleoside triphosphates as substrates. The protein is DNA-directed RNA polymerase subunit Rpo11 of Methanococcus vannielii (strain ATCC 35089 / DSM 1224 / JCM 13029 / OCM 148 / SB).